Reading from the N-terminus, the 258-residue chain is Trypsin eta (258 aa).

The signal sequence occupies residues 1–22 (MNKVILRILALLFLLGIGAVSA). Positions 23 to 27 (QPDGR) are cleaved as a propeptide — activation peptide. The Peptidase S1 domain occupies 28-258 (IVGGADTTNY…YFKDWIASRV (231 aa)). Cys-59 and Cys-75 are oxidised to a cystine. Residues His-74 and Asp-120 each act as charge relay system in the active site. Disulfide bonds link Cys-185–Cys-200 and Cys-211–Cys-235. Residue Ser-215 is the Charge relay system of the active site.

The protein belongs to the peptidase S1 family.

Its subcellular location is the secreted. The protein localises to the extracellular space. It catalyses the reaction Preferential cleavage: Arg-|-Xaa, Lys-|-Xaa.. The protein is Trypsin eta (etaTry) of Drosophila erecta (Fruit fly).